The chain runs to 583 residues: Laccase-21 (583 aa).

Residues 1 to 29 form the signal peptide; sequence MGIAKIPAVLWLLACAVLTFAVAISPAHG. Plastocyanin-like domains lie at 39 to 155 and 165 to 323; these read FITE…PKHG and KEIP…YYTG. N-linked (GlcNAc...) asparagine glycosylation occurs at asparagine 85. Histidine 89, histidine 91, histidine 134, and histidine 136 together coordinate Cu cation. N-linked (GlcNAc...) asparagine glycosylation is found at asparagine 282, asparagine 311, asparagine 384, asparagine 387, asparagine 399, asparagine 409, and asparagine 446. Residues 436–567 enclose the Plastocyanin-like 3 domain; it reads FPNNPAPVFV…NTVFIVKDGK (132 aa). Residues histidine 484, histidine 487, histidine 489, histidine 546, cysteine 547, histidine 548, histidine 552, and methionine 557 each coordinate Cu cation.

The protein belongs to the multicopper oxidase family. Cu cation serves as cofactor.

The protein resides in the secreted. It localises to the extracellular space. It is found in the apoplast. It catalyses the reaction 4 hydroquinone + O2 = 4 benzosemiquinone + 2 H2O. Lignin degradation and detoxification of lignin-derived products. The polypeptide is Laccase-21 (LAC21) (Oryza sativa subsp. japonica (Rice)).